A 326-amino-acid chain; its full sequence is Vitamin B12 import system permease protein BtuC (326 aa).

9 consecutive transmembrane segments (helical) span residues 17–39 (LSLS…QWIA), 59–81 (RTLA…QALF), 88–107 (PGLL…AVLL), 111–133 (QLAG…LILL), 146–168 (LLAG…YFST), 188–205 (WQQS…IWIC), 242–264 (MVGV…PHIL), 274–296 (VLLP…VARL), and 303–322 (LPIG…WLLL).

This sequence belongs to the binding-protein-dependent transport system permease family. FecCD subfamily. The complex is composed of two ATP-binding proteins (BtuD), two transmembrane proteins (BtuC) and a solute-binding protein (BtuF).

The protein localises to the cell inner membrane. Its function is as follows. Part of the ABC transporter complex BtuCDF involved in vitamin B12 import. Involved in the translocation of the substrate across the membrane. The chain is Vitamin B12 import system permease protein BtuC from Salmonella paratyphi A (strain ATCC 9150 / SARB42).